Here is a 121-residue protein sequence, read N- to C-terminus: Large ribosomal subunit protein uL14c (121 aa).

This sequence belongs to the universal ribosomal protein uL14 family. In terms of assembly, part of the 50S ribosomal subunit.

Its subcellular location is the plastid. It is found in the chloroplast. Binds to 23S rRNA. In Phaeodactylum tricornutum (strain CCAP 1055/1), this protein is Large ribosomal subunit protein uL14c.